A 226-amino-acid polypeptide reads, in one-letter code: Enolase-phosphatase E1 (226 aa).

It belongs to the HAD-like hydrolase superfamily. MasA/MtnC family. Monomer. It depends on Mg(2+) as a cofactor.

It carries out the reaction 5-methylsulfanyl-2,3-dioxopentyl phosphate + H2O = 1,2-dihydroxy-5-(methylsulfanyl)pent-1-en-3-one + phosphate. It functions in the pathway amino-acid biosynthesis; L-methionine biosynthesis via salvage pathway; L-methionine from S-methyl-5-thio-alpha-D-ribose 1-phosphate: step 3/6. Its pathway is amino-acid biosynthesis; L-methionine biosynthesis via salvage pathway; L-methionine from S-methyl-5-thio-alpha-D-ribose 1-phosphate: step 4/6. In terms of biological role, bifunctional enzyme that catalyzes the enolization of 2,3-diketo-5-methylthiopentyl-1-phosphate (DK-MTP-1-P) into the intermediate 2-hydroxy-3-keto-5-methylthiopentenyl-1-phosphate (HK-MTPenyl-1-P), which is then dephosphorylated to form the acireductone 1,2-dihydroxy-3-keto-5-methylthiopentene (DHK-MTPene). The protein is Enolase-phosphatase E1 of Shewanella baltica (strain OS223).